Consider the following 278-residue polypeptide: Checkpoint protein HUS1B (278 aa).

It belongs to the HUS1 family. In terms of assembly, interacts with RAD1 and RAD9B. In terms of tissue distribution, expressed strongly in testis, less in spleen, thymus, prostate, colon and leukocytes.

The polypeptide is Checkpoint protein HUS1B (HUS1B) (Homo sapiens (Human)).